The primary structure comprises 331 residues: Bifunctional nuclease 1 (331 aa).

One can recognise a BFN domain in the interval 126–261 (CVQNNPRVLR…RIAYNNGLKV (136 aa)). The 36-residue stretch at 291–326 (EAQEFDLVRNMLVAAVEERYKDAAQYRDQLFMFRAK) folds into the UVR domain.

This sequence belongs to the bifunctional nuclease family.

The protein resides in the nucleus. In terms of biological role, bifunctional nuclease with both RNase and DNase activities. Involved in basal defense response. Participates in abscisic acid-derived callose deposition following infection by a necrotrophic pathogen. The polypeptide is Bifunctional nuclease 1 (BBD1) (Oryza sativa subsp. japonica (Rice)).